The following is a 67-amino-acid chain: Light-harvesting protein B-870 alpha chain (67 aa).

The residue at position 1 (methionine 1) is an N-formylmethionine; in strain DSM 149 and DSM 151. Residues 1 to 12 (MWRIWRLFDPMR) lie on the Cytoplasmic side of the membrane. A helical transmembrane segment spans residues 13–33 (AMVAQAVFLLGLAVLIHLMLL). Histidine 29 serves as a coordination point for a bacteriochlorophyll. At 34–67 (GTNKYNWLDGAKKAPAATAVAPVPAEVTSLAQAK) the chain is on the periplasmic side.

The protein belongs to the antenna complex alpha subunit family. An alpha/beta heterodimer. The core complex is formed by different alpha and beta chains, binding bacteriochlorophyll molecules, and arranged most probably in tetrameric structures disposed around the reaction center. The non-pigmented gamma chains may constitute additional components. Post-translationally, the N-terminus is blocked.

It is found in the cell inner membrane. Its function is as follows. Antenna complexes are light-harvesting systems, which transfer the excitation energy to the reaction centers. The sequence is that of Light-harvesting protein B-870 alpha chain (pufA) from Rubrivivax gelatinosus (Rhodocyclus gelatinosus).